A 182-amino-acid polypeptide reads, in one-letter code: Ribosome-recycling factor (182 aa).

It belongs to the RRF family.

It is found in the cytoplasm. Responsible for the release of ribosomes from messenger RNA at the termination of protein biosynthesis. May increase the efficiency of translation by recycling ribosomes from one round of translation to another. This Prochlorococcus marinus (strain AS9601) protein is Ribosome-recycling factor.